Consider the following 247-residue polypeptide: ATP synthase subunit a, chloroplastic (247 aa).

5 consecutive transmembrane segments (helical) span residues 38 to 58, 95 to 115, 134 to 154, 199 to 219, and 220 to 240; these read QVLITSWVVIAILLGSATVAV, VPFIGTMFLFIFVSNWSGALL, INTTVALALPTSVAYFYAGLT, LVVVVLVSLVPSVVPIPVMFL, and GLFTSGIQALIFATLAAAYIG.

It belongs to the ATPase A chain family. As to quaternary structure, F-type ATPases have 2 components, CF(1) - the catalytic core - and CF(0) - the membrane proton channel. CF(1) has five subunits: alpha(3), beta(3), gamma(1), delta(1), epsilon(1). CF(0) has four main subunits: a, b, b' and c.

It localises to the plastid. It is found in the chloroplast thylakoid membrane. Functionally, key component of the proton channel; it plays a direct role in the translocation of protons across the membrane. This chain is ATP synthase subunit a, chloroplastic, found in Platanus occidentalis (Sycamore).